The sequence spans 827 residues: Villin-1 (827 aa).

A necessary for homodimerization region spans residues methionine 1–methionine 126. Residues methionine 1 to asparagine 734 form a core region. A Gelsolin-like 1 repeat occupies methionine 27–glycine 76. 2 LPA/PIP2-binding site regions span residues lysine 112–lysine 119 and arginine 138–arginine 146. 2 Gelsolin-like repeats span residues valine 148–leucine 188 and valine 265–lysine 309. Serine 366 is subject to Phosphoserine. Gelsolin-like repeat units follow at residues asparagine 407–threonine 457, threonine 528–glutamate 568, and phenylalanine 631–lysine 672. Serine 735 is modified (phosphoserine). Residues serine 735 to phenylalanine 827 form a headpiece region. An HP domain is found at serine 761–phenylalanine 827. Residues lysine 816 to lysine 824 form an LPA/PIP2-binding site 3 region.

Belongs to the villin/gelsolin family. As to quaternary structure, monomer. Homodimer; homodimerization is necessary for actin-bundling. Associates with F-actin; phosphorylation at tyrosine residues decreases the association with F-actin. Interacts (phosphorylated at C-terminus tyrosine phosphorylation sites) with PLCG1 (via the SH2 domains). Interacts (phosphorylated form) with PLCG1; the interaction is enhanced by hepatocyte growth factor (HGF). Phosphorylated on tyrosine residues by SRC. The unphosphorylated form increases the initial rate of actin-nucleating activity, whereas the tyrosine-phosphorylated form inhibits actin-nucleating activity, enhances actin-bundling activity and enhances actin-severing activity by reducing high Ca(2+) requirements. The tyrosine-phosphorylated form does not regulate actin-capping activity. Tyrosine phosphorylation is essential for cell migration: tyrosine phosphorylation sites in the N-terminus half regulate actin reorganization and cell morphology, whereas tyrosine phosphorylation sites in the C-terminus half regulate cell migration via interaction with PLCG1. Tyrosine phosphorylation is induced by epidermal growth factor (EGF) and stimulates cell migration.

It is found in the cytoplasm. Its subcellular location is the cytoskeleton. The protein resides in the cell projection. It localises to the lamellipodium. The protein localises to the ruffle. It is found in the microvillus. Its subcellular location is the filopodium tip. The protein resides in the filopodium. Epithelial cell-specific Ca(2+)-regulated actin-modifying protein that modulates the reorganization of microvillar actin filaments. Plays a role in the actin nucleation, actin filament bundle assembly, actin filament capping and severing. Binds phosphatidylinositol 4,5-bisphosphate (PIP2) and lysophosphatidic acid (LPA); binds LPA with higher affinity than PIP2. Binding to LPA increases its phosphorylation by SRC and inhibits all actin-modifying activities. Binding to PIP2 inhibits actin-capping and -severing activities but enhances actin-bundling activity. Regulates the intestinal epithelial cell morphology, cell invasion, cell migration and apoptosis. Protects against apoptosis induced by dextran sodium sulfate (DSS) in the gastrointestinal epithelium. Appears to regulate cell death by maintaining mitochondrial integrity. Enhances hepatocyte growth factor (HGF)-induced epithelial cell motility, chemotaxis and wound repair. The polypeptide is Villin-1 (VIL1) (Bos taurus (Bovine)).